A 192-amino-acid polypeptide reads, in one-letter code: MKIGVLALQGAVREHLRHIELSGHEGVSVKRVEQLEEIDGLILPGGESTTLRRLMNLYGFKEALVNSDLPMFGTCAGLIVLAQDIVGEEGYLQKLDITVERNSFGRQVDSFEAELDIKGIANDIEAVFIRAPHIEKVNSDNVEILSTVDDKIVAVKEGNYLGVSFHPELTDDYRVTQYFIDHIVAEHKHAAV.

An L-glutamine-binding site is contributed by 46 to 48 (GES). Cys75 serves as the catalytic Nucleophile. Residues Arg101 and 129-130 (IR) each bind L-glutamine. Catalysis depends on charge relay system residues His166 and Glu168.

It belongs to the glutaminase PdxT/SNO family. In terms of assembly, in the presence of PdxS, forms a dodecamer of heterodimers. Only shows activity in the heterodimer.

The catalysed reaction is aldehydo-D-ribose 5-phosphate + D-glyceraldehyde 3-phosphate + L-glutamine = pyridoxal 5'-phosphate + L-glutamate + phosphate + 3 H2O + H(+). It catalyses the reaction L-glutamine + H2O = L-glutamate + NH4(+). It participates in cofactor biosynthesis; pyridoxal 5'-phosphate biosynthesis. Its function is as follows. Catalyzes the hydrolysis of glutamine to glutamate and ammonia as part of the biosynthesis of pyridoxal 5'-phosphate. The resulting ammonia molecule is channeled to the active site of PdxS. The sequence is that of Pyridoxal 5'-phosphate synthase subunit PdxT from Staphylococcus carnosus (strain TM300).